Reading from the N-terminus, the 630-residue chain is tRNA uridine 5-carboxymethylaminomethyl modification enzyme MnmG (630 aa).

G13 to G18 is a binding site for FAD. Position 273 to 287 (G273 to F287) interacts with NAD(+).

The protein belongs to the MnmG family. Homodimer. Heterotetramer of two MnmE and two MnmG subunits. Requires FAD as cofactor.

It localises to the cytoplasm. In terms of biological role, NAD-binding protein involved in the addition of a carboxymethylaminomethyl (cmnm) group at the wobble position (U34) of certain tRNAs, forming tRNA-cmnm(5)s(2)U34. The protein is tRNA uridine 5-carboxymethylaminomethyl modification enzyme MnmG of Saccharophagus degradans (strain 2-40 / ATCC 43961 / DSM 17024).